Reading from the N-terminus, the 729-residue chain is Methionine--tRNA ligase (729 aa).

The 'HIGH' region motif lies at 12–22; sequence PYVNNIPHLGN. Zn(2+)-binding residues include Cys-143, Cys-146, Cys-155, and Cys-158. Positions 330–334 match the 'KMSKS' region motif; that stretch reads KFSKS. Lys-333 serves as a coordination point for ATP. The 106-residue stretch at 565–670 folds into the tRNA-binding domain; that stretch reads FSEQVCLKVV…DNPIPGERII (106 aa).

This sequence belongs to the class-I aminoacyl-tRNA synthetase family. MetG type 1 subfamily. As to quaternary structure, homodimer. Zn(2+) is required as a cofactor.

The protein localises to the cytoplasm. The enzyme catalyses tRNA(Met) + L-methionine + ATP = L-methionyl-tRNA(Met) + AMP + diphosphate. Its function is as follows. Is required not only for elongation of protein synthesis but also for the initiation of all mRNA translation through initiator tRNA(fMet) aminoacylation. This is Methionine--tRNA ligase from Borrelia hermsii (strain HS1 / DAH).